The following is a 180-amino-acid chain: Epididymal-specific lipocalin-6 (180 aa).

The N-terminal stretch at 1–20 (MGGLLLAALLALVAVPRAQA) is a signal peptide. Cys-81 and Cys-174 form a disulfide bridge.

This sequence belongs to the calycin superfamily. Lipocalin family.

Its subcellular location is the secreted. In terms of biological role, may play a role in male fertility. The protein is Epididymal-specific lipocalin-6 (LCN6) of Macaca mulatta (Rhesus macaque).